A 683-amino-acid chain; its full sequence is MIVIMKAGFLFLASLCLLVQAVPNKVADKTYVTRQKNIYELFWHVDQPTVYHPELYQKARTFNLVENLDNYNDKEAVNEFMQLLKHGMLPRGQVFTMMNKEMRHQAVVLFRLLYSAKTFDVFYNTAVWARFNVNEQMYLYALSVAVIHRPDTKLMKLPPMYEVMPHLYFNDEVMQKAYNIAMGDTADMKKTYNNIDYYLLAANYTGWYLTKHNVPEQRLNYFTEDVGLNHFYFMLNHNYPPFMLSNSLNFPQIRGEFYFFLHKQVLNRYYLERLSNDMGEVSYVSLDHPIPTGYYPTMRFRNGLAFPQRETGATVPLHMQKYVQMIHDLHTRISTAIDLGYVVDSYGNHVKLYTKQGLNVLGNIVQGNGDSVNVQLYGQLDLLVRKVLGFGYESNVKYQVVPSALQMWSTSLRDPVFFSIYKTILDYYHKYKENLPKYTTEELNFPGVSIESVTVDKLITYFDHFESMLNNGVSIQSHAKAKNTMIKARQYRLNHKPFTYHIVVNSDKNVKGMVRIFLGPKYDEFGHEVDLVHNYMNFMQMDEFVVNLKSGSNTIERNSHESVFVVPDEVPSDVLYNRLVVSEDGSETFKYSSQPYGFPERLLLPKGKKEGMPYNVLVVVSPFDDSNVVQIDSPVWGRHIYDGRAMGFPLDKPVDPLLLVLSNIHVKEVLVHHREMEELNVAL.

The first 21 residues, 1–21 (MIVIMKAGFLFLASLCLLVQA), serve as a signal peptide directing secretion. One can recognise a Hemocyanin N-terminal domain in the interval 32–153 (VTRQKNIYEL…VAVIHRPDTK (122 aa)). In terms of domain architecture, Hemocyanin middle spans 159–428 (PMYEVMPHLY…SIYKTILDYY (270 aa)). The N-linked (GlcNAc...) asparagine glycan is linked to N203. Positions 437–673 (KYTTEELNFP…IHVKEVLVHH (237 aa)) constitute a Hemocyanin C-terminal domain.

The protein belongs to the hemocyanin/hexamerin family. Probable homohexamer. Expressed in the fat body and secreted into the hemolymph (at protein level). Present in trophocytes and oenocytes of the fat body (at protein level).

The protein resides in the secreted. The protein localises to the nucleus. Its subcellular location is the cytoplasm. It localises to the cytoplasmic granule. In terms of biological role, storage protein that may function as a nutrient supply to compensate for lack of dietary proteins during metamorphosis and egg production. This is Hexamerin 70b from Apis mellifera (Honeybee).